A 346-amino-acid chain; its full sequence is tRNA N6-adenosine threonylcarbamoyltransferase (346 aa).

Fe cation-binding residues include His-111 and His-115. Substrate-binding positions include 134–138 (LVSGG), Asp-167, Gly-180, and Asn-279. Residue Asp-307 coordinates Fe cation.

The protein belongs to the KAE1 / TsaD family. Fe(2+) serves as cofactor.

Its subcellular location is the cytoplasm. The catalysed reaction is L-threonylcarbamoyladenylate + adenosine(37) in tRNA = N(6)-L-threonylcarbamoyladenosine(37) in tRNA + AMP + H(+). Functionally, required for the formation of a threonylcarbamoyl group on adenosine at position 37 (t(6)A37) in tRNAs that read codons beginning with adenine. Is involved in the transfer of the threonylcarbamoyl moiety of threonylcarbamoyl-AMP (TC-AMP) to the N6 group of A37, together with TsaE and TsaB. TsaD likely plays a direct catalytic role in this reaction. This chain is tRNA N6-adenosine threonylcarbamoyltransferase, found in Burkholderia pseudomallei (strain 1106a).